The sequence spans 322 residues: Transcription cofactor vestigial-like protein 2 (322 aa).

Low complexity predominate over residues 42–61; that stretch reads ASPGSSASGSSSFSNPTPAS. 2 disordered regions span residues 42–75 and 248–322; these read ASPGSSASGSSSFSNPTPASVKEEEGSPEKERPP and PGRL…PTLG. The segment covering 62 to 75 has biased composition (basic and acidic residues); it reads VKEEEGSPEKERPP. 2 stretches are compositionally biased toward low complexity: residues 248-258 and 270-283; these read PGRLAPASAPA and GEPAGSAWAAPGGP. Positions 312 to 322 are enriched in pro residues; the sequence is SAPPALYPTLG.

This sequence belongs to the vestigial family. As to quaternary structure, interacts with TEFs. Binds to TEAD1/TEF1. Skeletal muscle specific.

It is found in the nucleus. Functionally, may act as a specific coactivator for the mammalian TEFs. May play a role in the development of skeletal muscles. The protein is Transcription cofactor vestigial-like protein 2 (Vgll2) of Mus musculus (Mouse).